The primary structure comprises 59 residues: U-myrmeciitoxin(01)-Mg5b (59 aa).

The first 21 residues, 1-21 (MRLSYLSLALAIIFVLTIMHA), serve as a signal peptide directing secretion. The propeptide occupies 22–38 (SNVEAKASADPEPDAVG).

As to expression, expressed by the venom gland.

The protein localises to the secreted. In terms of biological role, may have antimicrobial properties, like most ant linear peptides. The protein is U-myrmeciitoxin(01)-Mg5b of Myrmecia gulosa (Red bulldog ant).